Here is a 321-residue protein sequence, read N- to C-terminus: Methionyl-tRNA formyltransferase (321 aa).

Residue 111-114 (SLLP) coordinates (6S)-5,6,7,8-tetrahydrofolate.

The protein belongs to the Fmt family.

The enzyme catalyses L-methionyl-tRNA(fMet) + (6R)-10-formyltetrahydrofolate = N-formyl-L-methionyl-tRNA(fMet) + (6S)-5,6,7,8-tetrahydrofolate + H(+). In terms of biological role, attaches a formyl group to the free amino group of methionyl-tRNA(fMet). The formyl group appears to play a dual role in the initiator identity of N-formylmethionyl-tRNA by promoting its recognition by IF2 and preventing the misappropriation of this tRNA by the elongation apparatus. In Bifidobacterium animalis subsp. lactis (strain AD011), this protein is Methionyl-tRNA formyltransferase.